The chain runs to 413 residues: Inactive squalene synthase 2 (413 aa).

Gly-2 is modified (N-acetylglycine). Transmembrane regions (helical) follow at residues 283 to 303 (AIFQSCAIPQIVAIGTLALCY) and 390 to 410 (AIFVVMFVLLLAIVVVYLKAN).

Belongs to the phytoene/squalene synthase family. Mg(2+) is required as a cofactor. The cofactor is Mn(2+). As to expression, mostly expressed in hypocotyls, leaves and cotyledons, and, to a lower extent, in stems.

It localises to the endoplasmic reticulum membrane. This is Inactive squalene synthase 2 from Arabidopsis thaliana (Mouse-ear cress).